The following is a 443-amino-acid chain: F-box only protein 39 (443 aa).

The F-box domain maps to 16-61; the sequence is WATLPDVCLRRVFWWLGDRDRSRAALVCRKWNQMMYSADLWRYRTI.

As to quaternary structure, directly interacts with SKP1 and CUL1.

Substrate-recognition component of the SCF (SKP1-CUL1-F-box protein)-type E3 ubiquitin ligase complex. The sequence is that of F-box only protein 39 (FBXO39) from Bos taurus (Bovine).